The sequence spans 95 residues: Aspartyl/glutamyl-tRNA(Asn/Gln) amidotransferase subunit C (95 aa).

This sequence belongs to the GatC family. Heterotrimer of A, B and C subunits.

It catalyses the reaction L-glutamyl-tRNA(Gln) + L-glutamine + ATP + H2O = L-glutaminyl-tRNA(Gln) + L-glutamate + ADP + phosphate + H(+). It carries out the reaction L-aspartyl-tRNA(Asn) + L-glutamine + ATP + H2O = L-asparaginyl-tRNA(Asn) + L-glutamate + ADP + phosphate + 2 H(+). Allows the formation of correctly charged Asn-tRNA(Asn) or Gln-tRNA(Gln) through the transamidation of misacylated Asp-tRNA(Asn) or Glu-tRNA(Gln) in organisms which lack either or both of asparaginyl-tRNA or glutaminyl-tRNA synthetases. The reaction takes place in the presence of glutamine and ATP through an activated phospho-Asp-tRNA(Asn) or phospho-Glu-tRNA(Gln). This is Aspartyl/glutamyl-tRNA(Asn/Gln) amidotransferase subunit C from Chloroherpeton thalassium (strain ATCC 35110 / GB-78).